We begin with the raw amino-acid sequence, 218 residues long: NAD(P)H-quinone oxidoreductase subunit I (218 aa).

2 consecutive 4Fe-4S ferredoxin-type domains span residues 55 to 84 and 95 to 124; these read GRIH…VDWV and RNYS…MTEE. Residues cysteine 64, cysteine 67, cysteine 70, cysteine 74, cysteine 104, cysteine 107, cysteine 110, and cysteine 114 each contribute to the [4Fe-4S] cluster site. The tract at residues 169–218 is disordered; it reads MDPHDVPANQPRAGQLPAEALKSLSLQQESVQGDEGESLQDASDQDQPSG. Residues 208–218 are compositionally biased toward polar residues; the sequence is QDASDQDQPSG.

It belongs to the complex I 23 kDa subunit family. In terms of assembly, NDH-1 is composed of at least 11 different subunits. [4Fe-4S] cluster is required as a cofactor.

Its subcellular location is the cellular thylakoid membrane. It catalyses the reaction a plastoquinone + NADH + (n+1) H(+)(in) = a plastoquinol + NAD(+) + n H(+)(out). The enzyme catalyses a plastoquinone + NADPH + (n+1) H(+)(in) = a plastoquinol + NADP(+) + n H(+)(out). In terms of biological role, NDH-1 shuttles electrons from an unknown electron donor, via FMN and iron-sulfur (Fe-S) centers, to quinones in the respiratory and/or the photosynthetic chain. The immediate electron acceptor for the enzyme in this species is believed to be plastoquinone. Couples the redox reaction to proton translocation, and thus conserves the redox energy in a proton gradient. The sequence is that of NAD(P)H-quinone oxidoreductase subunit I from Prochlorococcus marinus (strain MIT 9313).